A 104-amino-acid polypeptide reads, in one-letter code: NADH-quinone oxidoreductase subunit K (104 aa).

3 helical membrane-spanning segments follow: residues valine 4–alanine 24, valine 31–phenylalanine 51, and leucine 67–leucine 87.

It belongs to the complex I subunit 4L family. NDH-1 is composed of 14 different subunits. Subunits NuoA, H, J, K, L, M, N constitute the membrane sector of the complex.

The protein resides in the cell membrane. The enzyme catalyses a quinone + NADH + 5 H(+)(in) = a quinol + NAD(+) + 4 H(+)(out). NDH-1 shuttles electrons from NADH, via FMN and iron-sulfur (Fe-S) centers, to quinones in the respiratory chain. The immediate electron acceptor for the enzyme in this species is believed to be a menaquinone. Couples the redox reaction to proton translocation (for every two electrons transferred, four hydrogen ions are translocated across the cytoplasmic membrane), and thus conserves the redox energy in a proton gradient. The sequence is that of NADH-quinone oxidoreductase subunit K from Bacillus anthracis (strain A0248).